A 380-amino-acid polypeptide reads, in one-letter code: Glycogenin-2 (380 aa).

The UDP site is built by leucine 10, tyrosine 16, and arginine 95. UDP-alpha-D-glucose-binding residues include leucine 10, tyrosine 16, arginine 95, lysine 104, aspartate 120, alanine 121, aspartate 122, asparagine 158, threonine 159, aspartate 185, aspartate 188, and glutamine 189. Residues aspartate 120, alanine 121, and aspartate 122 each coordinate UDP. Aspartate 120 is a Mn(2+) binding site. Residue aspartate 122 participates in Mn(2+) binding. Residues tyrosine 230 and tyrosine 232 are each glycosylated (O-linked (Glc...) tyrosine). UDP-binding residues include histidine 249, glycine 252, and lysine 255. Residue histidine 249 participates in Mn(2+) binding. The UDP-alpha-D-glucose site is built by glycine 252 and lysine 255. Residues 331-355 form a disordered region; that stretch reads SVDRNASQKSTAEKHDIEKPTSKPQ. The segment covering 341–351 has biased composition (basic and acidic residues); sequence TAEKHDIEKPT. Tyrosine 367 is a glycosylation site (O-linked (Glc...) tyrosine).

The protein belongs to the glycosyltransferase 8 family. Glycogenin subfamily. Interacts with glycogen synthase GSY2. Mn(2+) is required as a cofactor.

The protein resides in the cytoplasm. It localises to the vacuole. The enzyme catalyses L-tyrosyl-[glycogenin] + UDP-alpha-D-glucose = alpha-D-glucosyl-L-tyrosyl-[glycogenin] + UDP + H(+). The catalysed reaction is [1,4-alpha-D-glucosyl](n)-L-tyrosyl-[glycogenin] + UDP-alpha-D-glucose = [1,4-alpha-D-glucosyl](n+1)-L-tyrosyl-[glycogenin] + UDP + H(+). Its function is as follows. Self-glucosylating initiator of glycogen synthesis. It catalyzes the formation of a short alpha (1,4)-glucosyl chain covalently attached via a glucose 1-O-tyrosyl linkage to internal tyrosine residues and these chains act as primers for the elongation reaction catalyzed by glycogen synthase. Capable of transferring glucosyl residues to unbound acceptors such as free oligoglucans or oligoglucan derivatives. This chain is Glycogenin-2, found in Saccharomyces cerevisiae (strain ATCC 204508 / S288c) (Baker's yeast).